The sequence spans 362 residues: 3-isopropylmalate dehydrogenase (362 aa).

77–88 contacts NAD(+); it reads GPKWGTGSVRPE. Substrate-binding residues include Arg95, Arg105, Arg134, and Asp223. Asp223, Asp248, and Asp252 together coordinate Mg(2+). Residue 287 to 298 coordinates NAD(+); sequence GSAPDLPKGKVN.

It belongs to the isocitrate and isopropylmalate dehydrogenases family. Homodimer. It depends on Mg(2+) as a cofactor. Requires Mn(2+) as cofactor.

Its subcellular location is the cytoplasm. The catalysed reaction is (2R,3S)-3-isopropylmalate + NAD(+) = 4-methyl-2-oxopentanoate + CO2 + NADH. It participates in amino-acid biosynthesis; L-leucine biosynthesis; L-leucine from 3-methyl-2-oxobutanoate: step 3/4. Functionally, catalyzes the oxidation of 3-carboxy-2-hydroxy-4-methylpentanoate (3-isopropylmalate) to 3-carboxy-4-methyl-2-oxopentanoate. The product decarboxylates to 4-methyl-2 oxopentanoate. In Zygosaccharomyces rouxii (strain ATCC 2623 / CBS 732 / NBRC 1130 / NCYC 568 / NRRL Y-229), this protein is 3-isopropylmalate dehydrogenase (LEU2).